Reading from the N-terminus, the 240-residue chain is Splicing factor U2AF 35 kDa subunit (240 aa).

Residue Ala-2 is modified to N-acetylalanine. A C3H1-type 1 zinc finger spans residues 12 to 40 (EKDKVNCSFYFKIGACRHGDRCSRLHNKP). An N6-methyllysine modification is found at Lys-39. Residues Ser-61 and Ser-145 each carry the phosphoserine modification. The 83-residue stretch at 65 to 147 (LRCAVSDVEM…QPIHAELSPV (83 aa)) folds into the RRM domain. A C3H1-type 2 zinc finger spans residues 149–176 (DFREACCRQYEMGECTRGGFCNFMHLKP). Arg-165 carries the omega-N-methylarginine modification. The disordered stretch occupies residues 183 to 240 (RELYGRRRKKHRSRSRSRERRSRSRDRGRGGGGGGGGGGGGRERDRRRSRDRERSGRF). Positions 188–208 (RRRKKHRSRSRSRERRSRSRD) are enriched in basic residues. The span at 212 to 222 (GGGGGGGGGGG) shows a compositional bias: gly residues. A compositionally biased stretch (basic and acidic residues) spans 223–240 (GRERDRRRSRDRERSGRF).

It belongs to the splicing factor SR family. Identified in the spliceosome C complex. Heterodimer with U2AF2. Interacts (via RS domain) with PHF5A (via N-terminus). Interacts with ZRANB2. Interacts with SDE2. Interacts with SF3B1.

The protein resides in the nucleus. It localises to the nucleus speckle. Plays a critical role in both constitutive and enhancer-dependent splicing by mediating protein-protein interactions and protein-RNA interactions required for accurate 3'-splice site selection. Recruits U2 snRNP to the branch point. Directly mediates interactions between U2AF2 and proteins bound to the enhancers and thus may function as a bridge between U2AF2 and the enhancer complex to recruit it to the adjacent intron. The polypeptide is Splicing factor U2AF 35 kDa subunit (U2AF1) (Homo sapiens (Human)).